The chain runs to 107 residues: Serine-rich and transmembrane domain-containing protein 1 (107 aa).

A helical membrane pass occupies residues 43 to 63 (IYVSIFLSLLAFLLLLLIIAL).

Its subcellular location is the membrane. The protein is Serine-rich and transmembrane domain-containing protein 1 (SERTM1) of Homo sapiens (Human).